Here is a 375-residue protein sequence, read N- to C-terminus: Putative fimbrium tip subunit Fim1C (375 aa).

The N-terminal stretch at 1-16 (MKLLANIFLSGLAILA) is a signal peptide. The N-palmitoyl cysteine moiety is linked to residue cysteine 17. A lipid anchor (S-diacylglycerol cysteine) is attached at cysteine 17. Positions 17 to 47 (CVSCSKDEDPVLPLEGAKLSVAVKASGTATK) are excised as a propeptide.

The protein belongs to the bacteroidetes fimbrillin superfamily. FimA/Mfa1 family. May be part of the fimbrial tip.

The protein localises to the fimbrium. The protein resides in the cell outer membrane. Probably a component of the fimbrium tip. Fimbriae are filamentous appendages on the cell surface that mediate cell adhesion and biofilm formation. The chain is Putative fimbrium tip subunit Fim1C from Parabacteroides distasonis (strain ATCC 8503 / DSM 20701 / CIP 104284 / JCM 5825 / NCTC 11152).